The primary structure comprises 267 residues: Aspartate/glutamate leucyltransferase (267 aa).

Positions 246-267 (EQEEQTRPLFRPSATGFSTGQE) are disordered.

The protein belongs to the R-transferase family. Bpt subfamily.

The protein localises to the cytoplasm. It carries out the reaction N-terminal L-glutamyl-[protein] + L-leucyl-tRNA(Leu) = N-terminal L-leucyl-L-glutamyl-[protein] + tRNA(Leu) + H(+). It catalyses the reaction N-terminal L-aspartyl-[protein] + L-leucyl-tRNA(Leu) = N-terminal L-leucyl-L-aspartyl-[protein] + tRNA(Leu) + H(+). Functionally, functions in the N-end rule pathway of protein degradation where it conjugates Leu from its aminoacyl-tRNA to the N-termini of proteins containing an N-terminal aspartate or glutamate. In Granulibacter bethesdensis (strain ATCC BAA-1260 / CGDNIH1), this protein is Aspartate/glutamate leucyltransferase.